The chain runs to 881 residues: Alanine--tRNA ligase (881 aa).

Belongs to the class-II aminoacyl-tRNA synthetase family.

The protein resides in the cytoplasm. It carries out the reaction tRNA(Ala) + L-alanine + ATP = L-alanyl-tRNA(Ala) + AMP + diphosphate. Functionally, catalyzes the attachment of alanine to tRNA(Ala) in a two-step reaction: alanine is first activated by ATP to form Ala-AMP and then transferred to the acceptor end of tRNA(Ala). Also edits incorrectly charged Ser-tRNA(Ala) and Gly-tRNA(Ala) via its editing domain. This is Alanine--tRNA ligase (alaS) from Lacticaseibacillus paracasei (strain ATCC 334 / BCRC 17002 / CCUG 31169 / CIP 107868 / KCTC 3260 / NRRL B-441) (Lactobacillus paracasei).